The sequence spans 329 residues: Phosphate acyltransferase (329 aa).

The protein belongs to the PlsX family. Homodimer. Probably interacts with PlsY.

Its subcellular location is the cytoplasm. It carries out the reaction a fatty acyl-[ACP] + phosphate = an acyl phosphate + holo-[ACP]. It functions in the pathway lipid metabolism; phospholipid metabolism. Catalyzes the reversible formation of acyl-phosphate (acyl-PO(4)) from acyl-[acyl-carrier-protein] (acyl-ACP). This enzyme utilizes acyl-ACP as fatty acyl donor, but not acyl-CoA. The sequence is that of Phosphate acyltransferase from Geobacillus sp. (strain WCH70).